Here is a 264-residue protein sequence, read N- to C-terminus: Thymidylate synthase (264 aa).

Arg-21 contacts dUMP. His-51 provides a ligand contact to (6R)-5,10-methylene-5,6,7,8-tetrahydrofolate. 126–127 (RR) is a dUMP binding site. The active-site Nucleophile is the Cys-146. DUMP is bound by residues 166-169 (RSAD), Asn-177, and 207-209 (HLY). A (6R)-5,10-methylene-5,6,7,8-tetrahydrofolate-binding site is contributed by Asp-169. Residue Ala-263 coordinates (6R)-5,10-methylene-5,6,7,8-tetrahydrofolate.

It belongs to the thymidylate synthase family. Bacterial-type ThyA subfamily. Homodimer.

The protein localises to the cytoplasm. The catalysed reaction is dUMP + (6R)-5,10-methylene-5,6,7,8-tetrahydrofolate = 7,8-dihydrofolate + dTMP. It participates in pyrimidine metabolism; dTTP biosynthesis. In terms of biological role, catalyzes the reductive methylation of 2'-deoxyuridine-5'-monophosphate (dUMP) to 2'-deoxythymidine-5'-monophosphate (dTMP) while utilizing 5,10-methylenetetrahydrofolate (mTHF) as the methyl donor and reductant in the reaction, yielding dihydrofolate (DHF) as a by-product. This enzymatic reaction provides an intracellular de novo source of dTMP, an essential precursor for DNA biosynthesis. In Paramagnetospirillum magneticum (strain ATCC 700264 / AMB-1) (Magnetospirillum magneticum), this protein is Thymidylate synthase.